Reading from the N-terminus, the 185-residue chain is Elongation factor P (185 aa).

It belongs to the elongation factor P family.

It localises to the cytoplasm. The protein operates within protein biosynthesis; polypeptide chain elongation. Functionally, involved in peptide bond synthesis. Stimulates efficient translation and peptide-bond synthesis on native or reconstituted 70S ribosomes in vitro. Probably functions indirectly by altering the affinity of the ribosome for aminoacyl-tRNA, thus increasing their reactivity as acceptors for peptidyl transferase. The protein is Elongation factor P of Clostridium kluyveri (strain ATCC 8527 / DSM 555 / NBRC 12016 / NCIMB 10680 / K1).